The following is a 394-amino-acid chain: Bone morphogenetic protein 2 (394 aa).

The signal sequence occupies residues 1-19; sequence MVAGTRCLLVLLLPQVLLG. Positions 20-280 are cleaved as a propeptide — cleaved by PCSK5; the sequence is GAAGLIPELG…GHPLHKREKR (261 aa). Residue S86 is modified to Phosphoserine. N-linked (GlcNAc...) asparagine glycosylation is found at N134, N162, and N198. The disordered stretch occupies residues 269–291; sequence GKGHPLHKREKRQAKHKQRKRLK. Positions 272-291 are enriched in basic residues; that stretch reads HPLHKREKRQAKHKQRKRLK. Disulfide bonds link C294/C359, C323/C391, and C327/C393. The N-linked (GlcNAc...) asparagine glycan is linked to N336.

This sequence belongs to the TGF-beta family. In terms of assembly, homodimer; disulfide-linked. Interacts with SOSTDC1. Interacts with GREM2, RGMA, RGMB and RGMC. Interacts with ASPN. Interacts with MAFP5. Interacts with FBN1 (via N-terminal domain) and FBN2. Interacts with type I receptor BMPR1A. Interacts with type II receptor BMPR2. Interacts with SCUBE3. Interacts with TNFAIP6 (primarily via Link domain); this interaction is inhibited by hyaluronan. Interacts with ERFE. Interacts with BMPR1A/ALK3; the interaction may induce HAMP expression. Forms heterodimers with BMP6 in vitro; the heterodimer then binds to its receptor BMPR1A /ALK3 and may induce HAMP expression. Interacts with TGFBR3.

Its subcellular location is the secreted. In terms of biological role, growth factor of the TGF-beta superfamily that plays essential roles in many developmental processes, including cardiogenesis, neurogenesis, and osteogenesis. Induces cartilage and bone formation. Initiates the canonical BMP signaling cascade by associating with type I receptor BMPR1A and type II receptor BMPR2. Once all three components are bound together in a complex at the cell surface, BMPR2 phosphorylates and activates BMPR1A. In turn, BMPR1A propagates signal by phosphorylating SMAD1/5/8 that travel to the nucleus and act as activators and repressors of transcription of target genes. Also acts to promote expression of HAMP, via the interaction with its receptor BMPR1A/ALK3. Can also signal through non-canonical pathways such as ERK/MAP kinase signaling cascade that regulates osteoblast differentiation. Also stimulates the differentiation of myoblasts into osteoblasts via the EIF2AK3-EIF2A-ATF4 pathway by stimulating EIF2A phosphorylation which leads to increased expression of ATF4 which plays a central role in osteoblast differentiation. Acts as a positive regulator of odontoblast differentiation during mesenchymal tooth germ formation, expression is repressed during the bell stage by MSX1-mediated inhibition of CTNNB1 signaling. This is Bone morphogenetic protein 2 (Bmp2) from Mus musculus (Mouse).